The chain runs to 299 residues: Taste receptor type 2 member 19 (299 aa).

Met1 is a topological domain (extracellular). The helical transmembrane segment at 2–22 threads the bilayer; that stretch reads MCFLLIILSILVVFAFVLGNF. Over 23-55 the chain is Cytoplasmic; the sequence is SNGFIALVNVIDWVNTRKISSADQILTALVVSR. A helical membrane pass occupies residues 56–76; that stretch reads IGLLWVMLFLWYATVFNSALY. At 77-87 the chain is on the extracellular side; that stretch reads GLEVRIVASNA. A helical transmembrane segment spans residues 88–108; it reads WAVMNHFSIWLAASLSIFCLL. The Cytoplasmic portion of the chain corresponds to 109–127; that stretch reads KIANFSNLIFLHLKKRIKS. A helical membrane pass occupies residues 128–148; sequence VVLVILLGPLVFLICNLAVIT. At 149-181 the chain is on the extracellular side; it reads MDERVWTKEYEGNVTWKIKLRNAIQLSSLTVTT. Asn161 is a glycosylation site (N-linked (GlcNAc...) asparagine). A helical membrane pass occupies residues 182–202; sequence LANLIPFTLSLICFLLLICSL. Residues 203–226 are Cytoplasmic-facing; it reads CKHLKKMRLHSKGSQDPSTKVHIK. Residues 227-247 form a helical membrane-spanning segment; sequence ALQTVTSFLMLFAIYFLCIIT. The Extracellular portion of the chain corresponds to 248-259; that stretch reads STWNLRTQQSKL. The chain crosses the membrane as a helical span at residues 260-280; that stretch reads VLLLCQTVAIMYPSFHSFILI. Residues 281–299 are Cytoplasmic-facing; that stretch reads MGSRKLKQTFLSVLWQMTR.

It belongs to the G-protein coupled receptor T2R family.

Its subcellular location is the membrane. Receptor that may play a role in the perception of bitterness and is gustducin-linked. May play a role in sensing the chemical composition of the gastrointestinal content. The activity of this receptor may stimulate alpha gustducin, mediate PLC-beta-2 activation and lead to the gating of TRPM5. This is Taste receptor type 2 member 19 (TAS2R19) from Pan paniscus (Pygmy chimpanzee).